The following is a 493-amino-acid chain: D-glyceraldehyde dehydrogenase (NADP(+)) (493 aa).

Residues 144-147 (TPWN), Arg155, 170-174 (KPSSD), 202-208 (KGSEIGD), 223-246 (GSTSTGQRIMEKASKNMAKLILEL), Cys279, and 379-381 (EIF) contribute to the NADP(+) site. The substrate site is built by Asn147 and Arg155. The Proton acceptor role is filled by Glu245. Cys279 provides a ligand contact to substrate. The Proton donor role is filled by Cys279.

The protein belongs to the aldehyde dehydrogenase family. Glyceraldehyde dehydrogenase subfamily. Homotetramer. Dimer of dimers.

It catalyses the reaction D-glyceraldehyde + NADP(+) + H2O = (R)-glycerate + NADPH + 2 H(+). The protein operates within carbohydrate degradation; glycolysis. Its activity is regulated as follows. Stable for 2 hours at 60 degrees Celsius but activity is decreased to less than 50 percent within 15 minutes at 70 degrees Celsius. In terms of biological role, NADP-dependent dehydrogenase of the nED (non-phosphorylated Entner-Doudoroff) pathway with highest activity towards glyceraldehydes (e.g. D,L-glyceraldehyde and D-glyceraldehyde), to a lesser extent towards D,L-glyceraldehyde-3-phosphate and glycolaldehyde, but no activity towards aliphatic or aromatic aldehydes. This chain is D-glyceraldehyde dehydrogenase (NADP(+)), found in Picrophilus torridus (strain ATCC 700027 / DSM 9790 / JCM 10055 / NBRC 100828 / KAW 2/3).